A 215-amino-acid polypeptide reads, in one-letter code: Reticulon-like protein B14 (215 aa).

The 181-residue stretch at phenylalanine 31–threonine 211 folds into the Reticulon domain. Transmembrane regions (helical) follow at residues lysine 41 to glutamate 61, tyrosine 62 to tryptophan 82, and leucine 141 to phenylalanine 161.

The protein resides in the endoplasmic reticulum membrane. The sequence is that of Reticulon-like protein B14 (RTNLB14) from Arabidopsis thaliana (Mouse-ear cress).